A 396-amino-acid chain; its full sequence is MDRSDSEKTDVLPMFKQEYGRYGRQMLVPEFGISGQLDLRSKRILVVGAGGLGSPAIQYLAGAGIGHITIIDDDTVEESNLHRQTIHAGNVNVPKSESAAEFVGKLNPCISVTPMVVRLSPSNSFSVFEGHDLVLDCTDGPAVRYLINDTAVLSGIPVVSASALKTEGQLSIYNYNGGPCYRCLFPIPPPADAVQTCGDGGIMGPVVGMMGMSQAMEAIKLLTGVYSESFTPFLMLYSAYNFPPWKSVKVRKRQKTCAACGDVPRISRQLIETGQVDYSEFCGSPSQVLLGEEHRITPEEYSKIVSTKHILLDVRERPQFDITSFPRSINIPWSELKHKEELDVQVDGSPVYVVCRYGNDSQNAVDKLQKLGIPSKDIKGGLYAWAKNVDEKFPIY.

ATP is bound by residues Gly-51, Asp-72, Ser-79–Arg-83, Lys-95, and Asp-139–Gly-140. Cys-180 and Cys-183 together coordinate Zn(2+). Cys-197 functions as the Glycyl thioester intermediate; for adenylyltransferase activity in the catalytic mechanism. Zn(2+) contacts are provided by Cys-257 and Cys-260. In terms of domain architecture, Rhodanese spans Val-305–Pro-394. Cys-355 (cysteine persulfide intermediate; for sulfurtransferase activity) is an active-site residue.

It in the N-terminal section; belongs to the HesA/MoeB/ThiF family. UBA4 subfamily. Zn(2+) serves as cofactor.

The protein resides in the cytoplasm. Its subcellular location is the cytosol. The protein operates within tRNA modification; 5-methoxycarbonylmethyl-2-thiouridine-tRNA biosynthesis. In terms of biological role, plays a central role in 2-thiolation of mcm(5)S(2)U at tRNA wobble positions of cytosolic tRNA(Lys), tRNA(Glu) and tRNA(Gln). Acts by mediating the C-terminal thiocarboxylation of sulfur carrier URM1. Its N-terminus first activates URM1 as acyl-adenylate (-COAMP), then the persulfide sulfur on the catalytic cysteine is transferred to URM1 to form thiocarboxylation (-COSH) of its C-terminus. The reaction probably involves hydrogen sulfide that is generated from the persulfide intermediate and that acts as a nucleophile towards URM1. Subsequently, a transient disulfide bond is formed. Does not use thiosulfate as sulfur donor; NFS1 probably acting as a sulfur donor for thiocarboxylation reactions. Prior mcm(5) tRNA modification by the elongator complex is required for 2-thiolation. May also be involved in protein urmylation. The chain is Adenylyltransferase and sulfurtransferase UBA4 from Yarrowia lipolytica (strain CLIB 122 / E 150) (Yeast).